The sequence spans 201 residues: Protein tirC (201 aa).

In terms of domain architecture, TIR spans 52-186 (ERIKVFIVHG…YVWINYTEDL (135 aa)).

This Dictyostelium discoideum (Social amoeba) protein is Protein tirC (tirC).